We begin with the raw amino-acid sequence, 299 residues long: Tyrosine recombinase XerC (299 aa).

Positions 1 to 85 (MDQHLDAYCM…AVRGFYKYLN (85 aa)) constitute a Core-binding (CB) domain. A Tyr recombinase domain is found at 106–285 (RLPKTLDTDR…DFQHLATVYD (180 aa)). Catalysis depends on residues Arg-146, Lys-170, His-237, Arg-240, and His-263. Tyr-272 (O-(3'-phospho-DNA)-tyrosine intermediate) is an active-site residue.

Belongs to the 'phage' integrase family. XerC subfamily. Forms a cyclic heterotetrameric complex composed of two molecules of XerC and two molecules of XerD.

Its subcellular location is the cytoplasm. Its function is as follows. Site-specific tyrosine recombinase, which acts by catalyzing the cutting and rejoining of the recombining DNA molecules. The XerC-XerD complex is essential to convert dimers of the bacterial chromosome into monomers to permit their segregation at cell division. It also contributes to the segregational stability of plasmids. This is Tyrosine recombinase XerC from Pseudomonas syringae pv. syringae (strain B728a).